The primary structure comprises 362 residues: Anthranilate phosphoribosyltransferase (362 aa).

5-phospho-alpha-D-ribose 1-diphosphate is bound by residues Gly96, 99 to 100 (GD), Thr104, 106 to 109 (NIST), 124 to 132 (KHGNRAASS), and Gly136. Position 96 (Gly96) interacts with anthranilate. Residue Ser108 coordinates Mg(2+). Asn127 is a binding site for anthranilate. Position 182 (Arg182) interacts with anthranilate. Residues Asp240 and Glu241 each contribute to the Mg(2+) site.

It belongs to the anthranilate phosphoribosyltransferase family. In terms of assembly, homodimer. It depends on Mg(2+) as a cofactor.

The enzyme catalyses N-(5-phospho-beta-D-ribosyl)anthranilate + diphosphate = 5-phospho-alpha-D-ribose 1-diphosphate + anthranilate. The protein operates within amino-acid biosynthesis; L-tryptophan biosynthesis; L-tryptophan from chorismate: step 2/5. Functionally, catalyzes the transfer of the phosphoribosyl group of 5-phosphorylribose-1-pyrophosphate (PRPP) to anthranilate to yield N-(5'-phosphoribosyl)-anthranilate (PRA). This is Anthranilate phosphoribosyltransferase from Rhodococcus jostii (strain RHA1).